A 572-amino-acid polypeptide reads, in one-letter code: Proline--tRNA ligase (572 aa).

Belongs to the class-II aminoacyl-tRNA synthetase family. ProS type 1 subfamily. As to quaternary structure, homodimer.

It is found in the cytoplasm. The enzyme catalyses tRNA(Pro) + L-proline + ATP = L-prolyl-tRNA(Pro) + AMP + diphosphate. Catalyzes the attachment of proline to tRNA(Pro) in a two-step reaction: proline is first activated by ATP to form Pro-AMP and then transferred to the acceptor end of tRNA(Pro). As ProRS can inadvertently accommodate and process non-cognate amino acids such as alanine and cysteine, to avoid such errors it has two additional distinct editing activities against alanine. One activity is designated as 'pretransfer' editing and involves the tRNA(Pro)-independent hydrolysis of activated Ala-AMP. The other activity is designated 'posttransfer' editing and involves deacylation of mischarged Ala-tRNA(Pro). The misacylated Cys-tRNA(Pro) is not edited by ProRS. The polypeptide is Proline--tRNA ligase (Klebsiella pneumoniae subsp. pneumoniae (strain ATCC 700721 / MGH 78578)).